Consider the following 539-residue polypeptide: UDP-N-acetylmuramate--L-alanine ligase (539 aa).

165–171 contacts ATP; it reads GTHGKTT.

This sequence belongs to the MurCDEF family.

The protein resides in the cytoplasm. The catalysed reaction is UDP-N-acetyl-alpha-D-muramate + L-alanine + ATP = UDP-N-acetyl-alpha-D-muramoyl-L-alanine + ADP + phosphate + H(+). It functions in the pathway cell wall biogenesis; peptidoglycan biosynthesis. Cell wall formation. The protein is UDP-N-acetylmuramate--L-alanine ligase of Trichodesmium erythraeum (strain IMS101).